A 136-amino-acid polypeptide reads, in one-letter code: Inner membrane protein YbhQ (136 aa).

Topologically, residues 1–12 (MKWQQRVRVATG) are cytoplasmic. The chain crosses the membrane as a helical span at residues 13 to 33 (LSCWQIMLHLLVVALLVVGWM). Topologically, residues 34–37 (SKTL) are periplasmic. A helical transmembrane segment spans residues 38–58 (VHVGVGLCALYCVTVVMMLVF). The Cytoplasmic portion of the chain corresponds to 59–71 (QRHPEQRWREVAD). A helical membrane pass occupies residues 72–92 (VLEELTTTWYFGAALIVLWLL). The Periplasmic portion of the chain corresponds to 93 to 99 (SRVLENN). The helical transmembrane segment at 100–120 (FLLAIAGLAILAGPAVVSLLA) threads the bilayer. Over 121–136 (KDKKLHHLTSKHRVRR) the chain is Cytoplasmic.

The protein localises to the cell inner membrane. This Escherichia coli O157:H7 protein is Inner membrane protein YbhQ (ybhQ).